We begin with the raw amino-acid sequence, 188 residues long: Chitin synthase 2 (188 aa).

The protein belongs to the chitin synthase family.

It is found in the cell membrane. It carries out the reaction [(1-&gt;4)-N-acetyl-beta-D-glucosaminyl](n) + UDP-N-acetyl-alpha-D-glucosamine = [(1-&gt;4)-N-acetyl-beta-D-glucosaminyl](n+1) + UDP + H(+). Its function is as follows. Polymerizes chitin, a structural polymer of the cell wall and septum, by transferring the sugar moiety of UDP-GlcNAc to the non-reducing end of the growing chitin polymer. The protein is Chitin synthase 2 (CHS2) of Exophiala jeanselmei (Dematiaceous fungus).